The primary structure comprises 417 residues: UDP-N-acetylglucosamine 1-carboxyvinyltransferase (417 aa).

K22–N23 is a binding site for phosphoenolpyruvate. R93 is a UDP-N-acetyl-alpha-D-glucosamine binding site. C117 acts as the Proton donor in catalysis. Position 117 is a 2-(S-cysteinyl)pyruvic acid O-phosphothioketal (C117). UDP-N-acetyl-alpha-D-glucosamine is bound by residues R122–Q126, D304, and I326.

The protein belongs to the EPSP synthase family. MurA subfamily.

The protein resides in the cytoplasm. The enzyme catalyses phosphoenolpyruvate + UDP-N-acetyl-alpha-D-glucosamine = UDP-N-acetyl-3-O-(1-carboxyvinyl)-alpha-D-glucosamine + phosphate. Its pathway is cell wall biogenesis; peptidoglycan biosynthesis. In terms of biological role, cell wall formation. Adds enolpyruvyl to UDP-N-acetylglucosamine. The chain is UDP-N-acetylglucosamine 1-carboxyvinyltransferase from Laribacter hongkongensis (strain HLHK9).